Reading from the N-terminus, the 108-residue chain is Synaptic plasticity regulator PANTS (108 aa).

Residues 58-108 form a disordered region; it reads KNHSTQAKDSLQESERKRLADQRKFTPVWELRQKPPSDWHLPLNQGEPQDP. A compositionally biased stretch (basic and acidic residues) spans 67-81; sequence SLQESERKRLADQRK.

Belongs to the UPF0545 family. Rapidly degraded by proteolysis following neuronal stimulation, resulting in increased AMPA receptor clustering.

The protein resides in the synapse. The protein localises to the synaptic cleft. In terms of biological role, negatively regulates long-term potentiation and modulates adult synaptic plasticity. The sequence is that of Synaptic plasticity regulator PANTS from Danio rerio (Zebrafish).